A 382-amino-acid chain; its full sequence is ATP phosphoribosyltransferase regulatory subunit (382 aa).

Belongs to the class-II aminoacyl-tRNA synthetase family. HisZ subfamily. As to quaternary structure, heteromultimer composed of HisG and HisZ subunits.

Its subcellular location is the cytoplasm. Its pathway is amino-acid biosynthesis; L-histidine biosynthesis; L-histidine from 5-phospho-alpha-D-ribose 1-diphosphate: step 1/9. Its function is as follows. Required for the first step of histidine biosynthesis. May allow the feedback regulation of ATP phosphoribosyltransferase activity by histidine. This chain is ATP phosphoribosyltransferase regulatory subunit, found in Lacticaseibacillus paracasei (strain ATCC 334 / BCRC 17002 / CCUG 31169 / CIP 107868 / KCTC 3260 / NRRL B-441) (Lactobacillus paracasei).